An 82-amino-acid chain; its full sequence is Ice-structuring protein B (82 aa).

Positions 1 to 23 (MALSLFTVGQLIFLFWTMRITEA) are cleaved as a signal peptide. Positions 24–44 (RPDPAAKAAPAAAAVPAAAAP) are cleaved as a propeptide — removed by a dipeptidylpeptidase. At Arg-81 the chain carries Arginine amide.

It belongs to the type-I AFP family. Post-translationally, amidated. As to expression, detected in liver (at protein level).

The protein localises to the secreted. It is found in the extracellular space. Functionally, contributes to protect fish blood from freezing at subzero sea water temperatures. Lowers the blood freezing point. Binds to nascent ice crystals and prevents further growth. The polypeptide is Ice-structuring protein B (Pseudopleuronectes americanus (Winter flounder)).